A 150-amino-acid chain; its full sequence is UPF0178 protein ECA0873 (150 aa).

This sequence belongs to the UPF0178 family.

This is UPF0178 protein ECA0873 from Pectobacterium atrosepticum (strain SCRI 1043 / ATCC BAA-672) (Erwinia carotovora subsp. atroseptica).